Consider the following 390-residue polypeptide: Zinc transporter 8 (390 aa).

The first 25 residues, 1–25, serve as a signal peptide directing secretion; sequence MRTNTTATVLLAAAVALLLATAARG. The N-linked (GlcNAc...) asparagine glycan is linked to asparagine 4. At 26–50 the chain is on the extracellular side; that stretch reads DGGDGGCGKEDAAAGRDRARARGLK. A helical membrane pass occupies residues 51 to 71; that stretch reads IAAFFSILVCGALGCGLPSLG. Over 72 to 82 the chain is Cytoplasmic; it reads RHVPALRPDGD. The chain crosses the membrane as a helical span at residues 83–103; the sequence is VFFLVKAFAAGVILATGFIHI. Topologically, residues 104–124 are extracellular; that stretch reads LPDAFDNLTDDCLPAGGPWKE. N-linked (GlcNAc...) asparagine glycosylation is present at asparagine 110. The helical transmembrane segment at 125–145 threads the bilayer; it reads FPFAGFGAMVGAIGTLVVDTL. Residues 146–235 lie on the Cytoplasmic side of the membrane; sequence ATGYFTRALS…DDKETTLRHR (90 aa). Residues 165-199 are disordered; the sequence is VADEEKQSAAATQQHNHHHNHHVVGDGGGGGEEHE. The helical transmembrane segment at 236-256 threads the bilayer; it reads VISQVLELGIVVHSVIIGISL. The Extracellular segment spans residues 257–267; that stretch reads GASQNPETIKP. A helical transmembrane segment spans residues 268–288; the sequence is LVVALSFHQMFEGMGLGGCIV. The Cytoplasmic segment spans residues 289-296; the sequence is QAKFKVRS. Residues 297-317 traverse the membrane as a helical segment; that stretch reads IVTMVLFFCLTTPVGIAVGVG. Residues 318-329 lie on the Extracellular side of the membrane; the sequence is ISSVYNESSPTA. The N-linked (GlcNAc...) asparagine glycan is linked to asparagine 323. A helical transmembrane segment spans residues 330 to 350; the sequence is LVVEGILNSVAAGILIYMALV. Topologically, residues 351–369 are cytoplasmic; it reads DLLAEDFMNPRVQSKGKLQ. The helical transmembrane segment at 370–390 threads the bilayer; sequence LGINLAMLAGAGLMSMLAKWA.

The protein belongs to the ZIP transporter (TC 2.A.5) family.

It is found in the cell membrane. In terms of biological role, zinc transporter that may mediate zinc uptake from the rhizosphere and may be responsible for the translocation of zinc within the plant. The polypeptide is Zinc transporter 8 (ZIP8) (Oryza sativa subsp. japonica (Rice)).